Here is a 329-residue protein sequence, read N- to C-terminus: Ribosomal RNA small subunit methyltransferase C (329 aa).

It belongs to the methyltransferase superfamily. RsmC family. In terms of assembly, monomer.

The protein resides in the cytoplasm. The catalysed reaction is guanosine(1207) in 16S rRNA + S-adenosyl-L-methionine = N(2)-methylguanosine(1207) in 16S rRNA + S-adenosyl-L-homocysteine + H(+). In terms of biological role, specifically methylates the guanine in position 1207 of 16S rRNA in the 30S particle. The polypeptide is Ribosomal RNA small subunit methyltransferase C (Actinobacillus pleuropneumoniae serotype 7 (strain AP76)).